We begin with the raw amino-acid sequence, 534 residues long: CTP synthase (534 aa).

Residues 1 to 267 (MTKYIFVTGG…DQIVCDHLKL (267 aa)) form an amidoligase domain region. Ser13 provides a ligand contact to CTP. Ser13 is a binding site for UTP. 14 to 19 (SIGKGI) lines the ATP pocket. Tyr54 serves as a coordination point for L-glutamine. ATP is bound at residue Asp71. Positions 71 and 141 each coordinate Mg(2+). CTP contacts are provided by residues 148-150 (DIE), 188-193 (KTKPTQ), and Lys224. UTP contacts are provided by residues 188–193 (KTKPTQ) and Lys224. Residues 292-534 (KIALVGKYVE…FVTAAVENAK (243 aa)) form the Glutamine amidotransferase type-1 domain. Gly354 contacts L-glutamine. The active-site Nucleophile; for glutamine hydrolysis is the Cys381. L-glutamine contacts are provided by residues 382 to 385 (LGMQ), Glu405, and Arg463. Residues His508 and Glu510 contribute to the active site.

The protein belongs to the CTP synthase family. Homotetramer.

The enzyme catalyses UTP + L-glutamine + ATP + H2O = CTP + L-glutamate + ADP + phosphate + 2 H(+). It catalyses the reaction L-glutamine + H2O = L-glutamate + NH4(+). The catalysed reaction is UTP + NH4(+) + ATP = CTP + ADP + phosphate + 2 H(+). It participates in pyrimidine metabolism; CTP biosynthesis via de novo pathway; CTP from UDP: step 2/2. With respect to regulation, allosterically activated by GTP, when glutamine is the substrate; GTP has no effect on the reaction when ammonia is the substrate. The allosteric effector GTP functions by stabilizing the protein conformation that binds the tetrahedral intermediate(s) formed during glutamine hydrolysis. Inhibited by the product CTP, via allosteric rather than competitive inhibition. Catalyzes the ATP-dependent amination of UTP to CTP with either L-glutamine or ammonia as the source of nitrogen. Regulates intracellular CTP levels through interactions with the four ribonucleotide triphosphates. The protein is CTP synthase of Streptococcus thermophilus (strain CNRZ 1066).